The sequence spans 358 residues: Prostaglandin E2 receptor EP2 subtype (358 aa).

Topologically, residues Met-1 to Glu-23 are extracellular. N-linked (GlcNAc...) asparagine glycans are attached at residues Asn-3 and Asn-6. Residues Ser-24 to Ala-47 form a helical membrane-spanning segment. Topologically, residues Arg-48–Ser-65 are cytoplasmic. A helical transmembrane segment spans residues Leu-66–Ala-91. At Ser-92–Tyr-111 the chain is on the extracellular side. The N-linked (GlcNAc...) asparagine glycan is linked to Asn-96. Cys-109 and Cys-187 form a disulfide bridge. A helical transmembrane segment spans residues Phe-112–Leu-132. Over Glu-133 to Ser-151 the chain is Cytoplasmic. Residues Gly-152 to Gly-176 traverse the membrane as a helical segment. At Gln-177–Gln-198 the chain is on the extracellular side. The chain crosses the membrane as a helical span at residues Leu-199–Ile-223. At Arg-224–His-262 the chain is on the cytoplasmic side. Residues Arg-231–Arg-253 form a disordered region. A helical transmembrane segment spans residues Leu-263–Met-286. Residue Asn-287 is glycosylated (N-linked (GlcNAc...) asparagine). The Extracellular segment spans residues Asn-287 to Gln-299. A helical membrane pass occupies residues Ala-300–Leu-323. Topologically, residues Arg-324–Leu-358 are cytoplasmic.

This sequence belongs to the G-protein coupled receptor 1 family. In terms of tissue distribution, placenta and lung.

Its subcellular location is the cell membrane. Its function is as follows. Receptor for prostaglandin E2 (PGE2). The activity of this receptor is mediated by G(s) proteins that stimulate adenylate cyclase. The subsequent raise in intracellular cAMP is responsible for the relaxing effect of this receptor on smooth muscle. The polypeptide is Prostaglandin E2 receptor EP2 subtype (PTGER2) (Homo sapiens (Human)).